We begin with the raw amino-acid sequence, 960 residues long: Leucine-rich repeat receptor-like serine/threonine-protein kinase SKM1 (960 aa).

The signal sequence occupies residues 1–29 (MSTSHHHHHPPYLITTLFFLFLNFSCLHA). Over 30-634 (NELELLLSFK…VRKRSTKSWW (605 aa)) the chain is Extracellular. A disulfide bridge links cysteine 61 with cysteine 68. N-linked (GlcNAc...) asparagine glycans are attached at residues asparagine 70, asparagine 83, asparagine 103, asparagine 108, asparagine 129, and asparagine 134. LRR repeat units lie at residues 71–96 (ISRV…TFRL), 97–120 (PFLQ…IFTT), 122–146 (SPSL…FLPN), 149–168 (TLDL…IGVF), 169–194 (SNLR…NLSR), 196–216 (EFLT…LGKM), 217–240 (KNLK…IGGL), 241–264 (SSLN…LGDL), 265–288 (KKLE…IFSL), 290–312 (NLIS…VAQM), 313–336 (QSLE…VTSL), 338–360 (RLKV…LGKH), 361–384 (NNLT…LCDS), 386–408 (HLTK…LGMC), 409–432 (QSLE…FTKL), 434–454 (LVNF…TWDM), 455–477 (PQLE…FSRS), 478–501 (KRLK…LMTF), 503–525 (EIMD…LSSC), 526–549 (KNLV…FAEF), 550–573 (QVLS…LGNI), and 575–598 (SLVQ…AFLA). An N-linked (GlcNAc...) asparagine glycan is attached at asparagine 191. Positions 221-226 (WIYLGY) match the CLE45 peptide binding motif. Asparagine 228 and asparagine 252 each carry an N-linked (GlcNAc...) asparagine glycan. A glycan (N-linked (GlcNAc...) asparagine) is linked at asparagine 324. N-linked (GlcNAc...) asparagine glycans are attached at residues asparagine 362 and asparagine 372. An N-linked (GlcNAc...) asparagine glycan is attached at asparagine 537. Asparagine 580 and asparagine 600 each carry an N-linked (GlcNAc...) asparagine glycan. Residues 635 to 655 (LIITSTFAAFLAVLVSGFFIV) traverse the membrane as a helical segment. Topologically, residues 656–960 (LVFQRTHNVL…TYLSKILSLA (305 aa)) are cytoplasmic. The region spanning 691–953 (FTVNTILSSL…SSSSSCTTYL (263 aa)) is the Protein kinase domain. Position 692 is a phosphothreonine (threonine 692). Residues 697-705 (LSSLKDQNV) and lysine 717 contribute to the ATP site. Tyrosine 834 carries the phosphotyrosine modification.

Belongs to the protein kinase superfamily. Ser/Thr protein kinase family. As to quaternary structure, self-interacts. Binds to CLE45 present in the pistil, particularly under relatively high temperature (at 30 degrees Celsius). In terms of tissue distribution, expressed in pollen grains and roots vascular tissues. Present in roots.

The protein localises to the cell membrane. The catalysed reaction is L-seryl-[protein] + ATP = O-phospho-L-seryl-[protein] + ADP + H(+). The enzyme catalyses L-threonyl-[protein] + ATP = O-phospho-L-threonyl-[protein] + ADP + H(+). Receptor with a serine/threonine-protein kinase activity. Together with SKM2, LRR-rich receptor-like kinase (LRR-RLK) required for male fertility by the perception of CLE43 and CLE45 peptides and the transduction of their promoting action in pollen tubes, especially under relatively high temperature (at 30 degrees Celsius), thus conferring tolerance against high temperature probably through the maintenance of mitochondrial activity. Seems to not be involved in the perception of CLE45 peptide in roots. The chain is Leucine-rich repeat receptor-like serine/threonine-protein kinase SKM1 from Arabidopsis thaliana (Mouse-ear cress).